Here is a 457-residue protein sequence, read N- to C-terminus: Cell division protein FtsZ (457 aa).

GTP-binding positions include 26–30, 115–117, glutamate 146, lysine 150, and aspartate 193; these read GGGGN and GTG. The segment covering 429-447 has biased composition (basic and acidic residues); it reads KKDVVRSEESERPAFESER. Residues 429-457 are disordered; that stretch reads KKDVVRSEESERPAFESERSSSPTTISFN. A compositionally biased stretch (polar residues) spans 448–457; the sequence is SSSPTTISFN.

The protein belongs to the FtsZ family. As to quaternary structure, homodimer. Polymerizes to form a dynamic ring structure in a strictly GTP-dependent manner. Interacts directly with several other division proteins.

The protein resides in the cytoplasm. Functionally, essential cell division protein that forms a contractile ring structure (Z ring) at the future cell division site. The regulation of the ring assembly controls the timing and the location of cell division. One of the functions of the FtsZ ring is to recruit other cell division proteins to the septum to produce a new cell wall between the dividing cells. Binds GTP and shows GTPase activity. The sequence is that of Cell division protein FtsZ from Porphyromonas gingivalis (strain ATCC BAA-308 / W83).